The primary structure comprises 208 residues: MAVHVVDHPLVRHKLGILREDGISTSRFRALAQEISRLLTYEATKDLATEAKTITGWAGEVEVEEIKGKKITVVPILRAGLGMMDGVLDMVPGARVSVVGFYRDEETLQPVEYYVKLASNIDERIALILDPMLATGGTLMATIDLLKKSGCTNIKGLFLVAAPEGIEKIVKAHPDVDIYTASIDEKLNDAGYILPGLGDAGDKIFGTK.

Residues Arg-78, Arg-103, and 130–138 (DPMLATGGT) contribute to the 5-phospho-alpha-D-ribose 1-diphosphate site. Uracil is bound by residues Ile-193 and 198–200 (GDA). Position 199 (Asp-199) interacts with 5-phospho-alpha-D-ribose 1-diphosphate.

This sequence belongs to the UPRTase family. The cofactor is Mg(2+).

It catalyses the reaction UMP + diphosphate = 5-phospho-alpha-D-ribose 1-diphosphate + uracil. The protein operates within pyrimidine metabolism; UMP biosynthesis via salvage pathway; UMP from uracil: step 1/1. With respect to regulation, allosterically activated by GTP. In terms of biological role, catalyzes the conversion of uracil and 5-phospho-alpha-D-ribose 1-diphosphate (PRPP) to UMP and diphosphate. This is Uracil phosphoribosyltransferase from Maridesulfovibrio salexigens (strain ATCC 14822 / DSM 2638 / NCIMB 8403 / VKM B-1763) (Desulfovibrio salexigens).